The sequence spans 216 residues: Small ribosomal subunit protein uS3c (216 aa).

In terms of domain architecture, KH type-2 spans 43–115; that stretch reads FENDWGTLYN…QTRIKVIQVN (73 aa).

This sequence belongs to the universal ribosomal protein uS3 family. As to quaternary structure, part of the 30S ribosomal subunit.

The protein resides in the plastid. It is found in the chloroplast. This is Small ribosomal subunit protein uS3c (rps3) from Emiliania huxleyi (Coccolithophore).